The following is a 362-amino-acid chain: Peptide chain release factor 1 (362 aa).

An N5-methylglutamine modification is found at Gln-237. The segment at 279–305 is disordered; the sequence is RLQQAEDEKRRSEEESSRRNLVASGDR. The segment covering 282–296 has biased composition (basic and acidic residues); sequence QAEDEKRRSEEESSR.

Belongs to the prokaryotic/mitochondrial release factor family. Methylated by PrmC. Methylation increases the termination efficiency of RF1.

The protein resides in the cytoplasm. Functionally, peptide chain release factor 1 directs the termination of translation in response to the peptide chain termination codons UAG and UAA. This Colwellia psychrerythraea (strain 34H / ATCC BAA-681) (Vibrio psychroerythus) protein is Peptide chain release factor 1.